Here is a 517-residue protein sequence, read N- to C-terminus: Meiosis-specific transcription factor mei4 (517 aa).

Residues 81–172 constitute a DNA-binding region (fork-head); it reads KPPCSYATLI…QNFVSVRLHR (92 aa). The segment at 170–278 is disordered; sequence LHRSHSTDSN…PNAETQEDLP (109 aa). Residues 209–223 are compositionally biased toward low complexity; the sequence is NSFNSSTSTSGSSSN. Positions 230 to 246 are enriched in polar residues; the sequence is NDASQPSNQDSSLNSNI. Over residues 254 to 270 the composition is skewed to low complexity; it reads SNVQSNSSSSENVPKPN.

Its subcellular location is the nucleus. Functionally, functions as a meiosis-specific transcription factor. Binds to the 5'-GTAAAYA-3' consensus sequence of the promoter of the spo6 gene. The polypeptide is Meiosis-specific transcription factor mei4 (mei4) (Schizosaccharomyces pombe (strain 972 / ATCC 24843) (Fission yeast)).